A 153-amino-acid chain; its full sequence is UPF0260 protein CKO_01185 (153 aa).

Belongs to the UPF0260 family.

The chain is UPF0260 protein CKO_01185 from Citrobacter koseri (strain ATCC BAA-895 / CDC 4225-83 / SGSC4696).